The following is a 235-amino-acid chain: Sugar fermentation stimulation protein homolog (235 aa).

Belongs to the SfsA family.

The chain is Sugar fermentation stimulation protein homolog from Ectopseudomonas mendocina (strain ymp) (Pseudomonas mendocina).